A 517-amino-acid chain; its full sequence is ATP synthase subunit alpha 1 (517 aa).

174–181 (GDRQTGKT) is a binding site for ATP.

Belongs to the ATPase alpha/beta chains family. In terms of assembly, F-type ATPases have 2 components, CF(1) - the catalytic core - and CF(0) - the membrane proton channel. CF(1) has five subunits: alpha(3), beta(3), gamma(1), delta(1), epsilon(1). CF(0) has three main subunits: a(1), b(2) and c(9-12). The alpha and beta chains form an alternating ring which encloses part of the gamma chain. CF(1) is attached to CF(0) by a central stalk formed by the gamma and epsilon chains, while a peripheral stalk is formed by the delta and b chains.

The protein localises to the cell inner membrane. The enzyme catalyses ATP + H2O + 4 H(+)(in) = ADP + phosphate + 5 H(+)(out). Functionally, produces ATP from ADP in the presence of a proton gradient across the membrane. The alpha chain is a regulatory subunit. The sequence is that of ATP synthase subunit alpha 1 from Polaromonas naphthalenivorans (strain CJ2).